The primary structure comprises 1136 residues: Type I inositol polyphosphate 5-phosphatase 13 (1136 aa).

WD repeat units follow at residues 147-185, 205-244, 259-297, 436-475, and 515-552; these read ETQTGRFLRNIACTETQLWAGQENGIRFWNLEDAYEAGC, VTTSPTMCLVADQSNKLLWSGHKDGKIRAWKMDQSSVSHD, AHRGPVNSIVISSYGDMWSCSEGGVIKIWPWDTLEKSLL, EDTRKTEAIVLAVDGTIWTGSISGLIVQWDGNGNRLRDVN, and SHNEPVIKLAAGGGFIFSLATHGGVRGWYVTSPGPLDN. Catalytic regions lie at residues 782-798 and 861-876; these read DMVAFFGDFNYRLFGIT and KKRIPAWCDRVIYRDT. K940 is covalently cross-linked (Glycyl lysine isopeptide (Lys-Gly) (interchain with G-Cter in ubiquitin)). Residues 1104 to 1136 form a disordered region; the sequence is KNLGGSRRYPTDITRNGSTRPRTEDSVRRGKSR. Residues 1124–1136 are compositionally biased toward basic and acidic residues; sequence PRTEDSVRRGKSR.

Belongs to the inositol polyphosphate 5-phosphatase family. As to quaternary structure, interacts with KIN10, but not with PHOT1. The cofactor is Mg(2+). Expressed in young seedlings and flowers. Highly expressed in anther and pollen grains, but not in pistils. Not detected in maturated roots, stems and rosette leaves.

Its subcellular location is the nucleus. The catalysed reaction is 1D-myo-inositol 1,4,5-trisphosphate + H2O = 1D-myo-inositol 1,4-bisphosphate + phosphate. Its function is as follows. Converts inositol 1,4,5-trisphosphate (Ins(1,4,5)P3) to inositol 1,4-bisphosphate. Modulates cotyledon vein development through regulating auxin homeostasis. Involved in blue light responses. Decreases the amount of KIN10 degraded by the proteasome under low nutrient conditions. Participates with IP5P12 in the control of Ins(1,4,5)P3/Ca(2+) levels that is crucial for maintaining pollen dormancy and regulating early germination of pollen. May modulate auxin transport by regulating vesicle trafficking and thereby plays a role in root gravitropism. This chain is Type I inositol polyphosphate 5-phosphatase 13, found in Arabidopsis thaliana (Mouse-ear cress).